Here is a 508-residue protein sequence, read N- to C-terminus: Histidine ammonia-lyase (508 aa).

A cross-link (5-imidazolinone (Ala-Gly)) is located at residues 139–141 (ASG). The residue at position 140 (Ser140) is a 2,3-didehydroalanine (Ser).

The protein belongs to the PAL/histidase family. Contains an active site 4-methylidene-imidazol-5-one (MIO), which is formed autocatalytically by cyclization and dehydration of residues Ala-Ser-Gly.

The protein localises to the cytoplasm. It catalyses the reaction L-histidine = trans-urocanate + NH4(+). Its pathway is amino-acid degradation; L-histidine degradation into L-glutamate; N-formimidoyl-L-glutamate from L-histidine: step 1/3. This is Histidine ammonia-lyase from Acidiphilium cryptum (strain JF-5).